Here is a 468-residue protein sequence, read N- to C-terminus: ATP synthase subunit beta 2 (468 aa).

155 to 162 serves as a coordination point for ATP; it reads GGAGVGKT.

The protein belongs to the ATPase alpha/beta chains family. In terms of assembly, F-type ATPases have 2 components, CF(1) - the catalytic core - and CF(0) - the membrane proton channel. CF(1) has five subunits: alpha(3), beta(3), gamma(1), delta(1), epsilon(1). CF(0) has four main subunits: a(1), b(1), b'(1) and c(9-12).

The protein resides in the cell inner membrane. It carries out the reaction ATP + H2O + 4 H(+)(in) = ADP + phosphate + 5 H(+)(out). In terms of biological role, produces ATP from ADP in the presence of a proton gradient across the membrane. The catalytic sites are hosted primarily by the beta subunits. The protein is ATP synthase subunit beta 2 of Chlorobium luteolum (strain DSM 273 / BCRC 81028 / 2530) (Pelodictyon luteolum).